Here is a 161-residue protein sequence, read N- to C-terminus: Regulator of ribonuclease activity A (161 aa).

The protein belongs to the RraA family. In terms of assembly, homotrimer. Binds to both RNA-binding sites in the C-terminal region of Rne and to RhlB.

The protein localises to the cytoplasm. Functionally, globally modulates RNA abundance by binding to RNase E (Rne) and regulating its endonucleolytic activity. Can modulate Rne action in a substrate-dependent manner by altering the composition of the degradosome. Modulates RNA-binding and helicase activities of the degradosome. In Idiomarina loihiensis (strain ATCC BAA-735 / DSM 15497 / L2-TR), this protein is Regulator of ribonuclease activity A.